The following is a 598-amino-acid chain: Elongation factor 4 (598 aa).

Residues 3–185 (QHIRNFSIIA…MIVARIPPPE (183 aa)) form the tr-type G domain. Residues 15 to 20 (DHGKST) and 132 to 135 (NKID) contribute to the GTP site.

It belongs to the TRAFAC class translation factor GTPase superfamily. Classic translation factor GTPase family. LepA subfamily.

The protein localises to the cell inner membrane. It carries out the reaction GTP + H2O = GDP + phosphate + H(+). Functionally, required for accurate and efficient protein synthesis under certain stress conditions. May act as a fidelity factor of the translation reaction, by catalyzing a one-codon backward translocation of tRNAs on improperly translocated ribosomes. Back-translocation proceeds from a post-translocation (POST) complex to a pre-translocation (PRE) complex, thus giving elongation factor G a second chance to translocate the tRNAs correctly. Binds to ribosomes in a GTP-dependent manner. This Nitrosomonas eutropha (strain DSM 101675 / C91 / Nm57) protein is Elongation factor 4.